Reading from the N-terminus, the 236-residue chain is 2-C-methyl-D-erythritol 4-phosphate cytidylyltransferase (236 aa).

This sequence belongs to the IspD/TarI cytidylyltransferase family. IspD subfamily. As to quaternary structure, homodimer.

The enzyme catalyses 2-C-methyl-D-erythritol 4-phosphate + CTP + H(+) = 4-CDP-2-C-methyl-D-erythritol + diphosphate. It functions in the pathway isoprenoid biosynthesis; isopentenyl diphosphate biosynthesis via DXP pathway; isopentenyl diphosphate from 1-deoxy-D-xylulose 5-phosphate: step 2/6. Catalyzes the formation of 4-diphosphocytidyl-2-C-methyl-D-erythritol from CTP and 2-C-methyl-D-erythritol 4-phosphate (MEP). The sequence is that of 2-C-methyl-D-erythritol 4-phosphate cytidylyltransferase from Escherichia coli O17:K52:H18 (strain UMN026 / ExPEC).